The following is a 1062-amino-acid chain: Carbamoyl phosphate synthase large chain (1062 aa).

The tract at residues 1-401 (MPKRKDIHKI…AMQKAVRSLE (401 aa)) is carboxyphosphate synthetic domain. Arginine 129, arginine 169, glycine 175, glycine 176, lysine 208, isoleucine 210, glutamate 215, glycine 241, isoleucine 242, histidine 243, glutamine 284, and glutamate 298 together coordinate ATP. Positions 133–327 (KNLCKELGEP…IAKMAAKIAV (195 aa)) constitute an ATP-grasp 1 domain. Mg(2+)-binding residues include glutamine 284, glutamate 298, and asparagine 300. Residues glutamine 284, glutamate 298, and asparagine 300 each contribute to the Mn(2+) site. The oligomerization domain stretch occupies residues 402-546 (IDEKDLYSEE…YSTYDAENES (145 aa)). Positions 547 to 929 (HRSGKKSVIV…ALYKAFAGAK (383 aa)) are carbamoyl phosphate synthetic domain. Positions 671–861 (DDIIKELKLN…MAQVATRVIM (191 aa)) constitute an ATP-grasp 2 domain. Positions 707, 746, 748, 752, 777, 778, 779, 780, 820, and 832 each coordinate ATP. The Mg(2+) site is built by glutamine 820, glutamate 832, and asparagine 834. Residues glutamine 820, glutamate 832, and asparagine 834 each coordinate Mn(2+). Positions 930–1062 (MQLPENGNVL…NRSFATDALQ (133 aa)) constitute an MGS-like domain. The tract at residues 930 to 1062 (MQLPENGNVL…NRSFATDALQ (133 aa)) is allosteric domain.

It belongs to the CarB family. In terms of assembly, composed of two chains; the small (or glutamine) chain promotes the hydrolysis of glutamine to ammonia, which is used by the large (or ammonia) chain to synthesize carbamoyl phosphate. Tetramer of heterodimers (alpha,beta)4. Mg(2+) is required as a cofactor. It depends on Mn(2+) as a cofactor.

It carries out the reaction hydrogencarbonate + L-glutamine + 2 ATP + H2O = carbamoyl phosphate + L-glutamate + 2 ADP + phosphate + 2 H(+). The catalysed reaction is hydrogencarbonate + NH4(+) + 2 ATP = carbamoyl phosphate + 2 ADP + phosphate + 2 H(+). Its pathway is amino-acid biosynthesis; L-arginine biosynthesis; carbamoyl phosphate from bicarbonate: step 1/1. The protein operates within pyrimidine metabolism; UMP biosynthesis via de novo pathway; (S)-dihydroorotate from bicarbonate: step 1/3. Functionally, large subunit of the glutamine-dependent carbamoyl phosphate synthetase (CPSase). CPSase catalyzes the formation of carbamoyl phosphate from the ammonia moiety of glutamine, carbonate, and phosphate donated by ATP, constituting the first step of 2 biosynthetic pathways, one leading to arginine and/or urea and the other to pyrimidine nucleotides. The large subunit (synthetase) binds the substrates ammonia (free or transferred from glutamine from the small subunit), hydrogencarbonate and ATP and carries out an ATP-coupled ligase reaction, activating hydrogencarbonate by forming carboxy phosphate which reacts with ammonia to form carbamoyl phosphate. The chain is Carbamoyl phosphate synthase large chain from Lactobacillus acidophilus (strain ATCC 700396 / NCK56 / N2 / NCFM).